The following is a 693-amino-acid chain: eEF1A lysine and N-terminal methyltransferase (693 aa).

Belongs to the methyltransferase superfamily.

It carries out the reaction L-lysyl-[protein] + S-adenosyl-L-methionine = N(6)-methyl-L-lysyl-[protein] + S-adenosyl-L-homocysteine + H(+). The enzyme catalyses N(6)-methyl-L-lysyl-[protein] + S-adenosyl-L-methionine = N(6),N(6)-dimethyl-L-lysyl-[protein] + S-adenosyl-L-homocysteine + H(+). It catalyses the reaction N-terminal glycyl-L-lysyl-L-glutamyl-[protein] + 3 S-adenosyl-L-methionine = N-terminal N,N,N-trimethyl-glycyl-L-lysyl-L-glutamyl-[protein] + 3 S-adenosyl-L-homocysteine + 3 H(+). Its function is as follows. Dual methyltransferase that catalyzes methylation of elongation factor 1-alpha (eef1a1 and eef1a2) at two different positions, and is therefore involved in the regulation of mRNA translation. Via its C-terminus, methylates the N-terminus of eef1a1 and eef1a2. Via its N-terminus dimethylates lysine residues of eef1a1 and eef1a2. This is eEF1A lysine and N-terminal methyltransferase (mettl13) from Xenopus laevis (African clawed frog).